The primary structure comprises 158 residues: SsrA-binding protein (158 aa).

Positions 133–147 (KRQALRERQDNREAQ) are enriched in basic and acidic residues. A disordered region spans residues 133–158 (KRQALRERQDNREAQRAMASRKHLGE).

It belongs to the SmpB family.

It is found in the cytoplasm. Required for rescue of stalled ribosomes mediated by trans-translation. Binds to transfer-messenger RNA (tmRNA), required for stable association of tmRNA with ribosomes. tmRNA and SmpB together mimic tRNA shape, replacing the anticodon stem-loop with SmpB. tmRNA is encoded by the ssrA gene; the 2 termini fold to resemble tRNA(Ala) and it encodes a 'tag peptide', a short internal open reading frame. During trans-translation Ala-aminoacylated tmRNA acts like a tRNA, entering the A-site of stalled ribosomes, displacing the stalled mRNA. The ribosome then switches to translate the ORF on the tmRNA; the nascent peptide is terminated with the 'tag peptide' encoded by the tmRNA and targeted for degradation. The ribosome is freed to recommence translation, which seems to be the essential function of trans-translation. This chain is SsrA-binding protein, found in Leifsonia xyli subsp. xyli (strain CTCB07).